Here is a 57-residue protein sequence, read N- to C-terminus: uncharacterized protein (57 aa).

The next 2 membrane-spanning stretches (helical) occupy residues 2 to 22 (LLVV…LRSV) and 29 to 49 (GFLL…MTVI).

The protein resides in the cell membrane. This is an uncharacterized protein from Bacillus subtilis (strain 168).